Reading from the N-terminus, the 800-residue chain is Phenylalanine--tRNA ligase beta subunit (800 aa).

Positions 39–154 (TKEIKNLVVG…TEVKPGTDAL (116 aa)) constitute a tRNA-binding domain. The B5 domain maps to 408 to 483 (CFVTPIDISV…RIYGYDKIPS (76 aa)). Positions 461, 467, 470, and 471 each coordinate Mg(2+). The FDX-ACB domain maps to 708-800 (PRFPGVSRDI…ALKSEGATIR (93 aa)).

The protein belongs to the phenylalanyl-tRNA synthetase beta subunit family. Type 1 subfamily. As to quaternary structure, tetramer of two alpha and two beta subunits. Mg(2+) is required as a cofactor.

It localises to the cytoplasm. The catalysed reaction is tRNA(Phe) + L-phenylalanine + ATP = L-phenylalanyl-tRNA(Phe) + AMP + diphosphate + H(+). This is Phenylalanine--tRNA ligase beta subunit from Staphylococcus saprophyticus subsp. saprophyticus (strain ATCC 15305 / DSM 20229 / NCIMB 8711 / NCTC 7292 / S-41).